Consider the following 668-residue polypeptide: UvrABC system protein B (668 aa).

Residues 25–413 form the Helicase ATP-binding domain; that stretch reads NGINTGLQHQ…QNTVQQVIRP (389 aa). Residue 38–45 participates in ATP binding; the sequence is GVTGSGKT. The short motif at 91–114 is the Beta-hairpin element; the sequence is YYDYYQPEAYIAASDTYIEKDSSV. One can recognise a Helicase C-terminal domain in the interval 429 to 595; the sequence is QVEDALSEIN…TIIKNIDDML (167 aa). One can recognise a UVR domain in the interval 629–664; the sequence is TKVIKALEKRMRAYAKELEFEKATTIRDKITEVKQK.

Belongs to the UvrB family. In terms of assembly, forms a heterotetramer with UvrA during the search for lesions. Interacts with UvrC in an incision complex.

The protein resides in the cytoplasm. Its function is as follows. The UvrABC repair system catalyzes the recognition and processing of DNA lesions. A damage recognition complex composed of 2 UvrA and 2 UvrB subunits scans DNA for abnormalities. Upon binding of the UvrA(2)B(2) complex to a putative damaged site, the DNA wraps around one UvrB monomer. DNA wrap is dependent on ATP binding by UvrB and probably causes local melting of the DNA helix, facilitating insertion of UvrB beta-hairpin between the DNA strands. Then UvrB probes one DNA strand for the presence of a lesion. If a lesion is found the UvrA subunits dissociate and the UvrB-DNA preincision complex is formed. This complex is subsequently bound by UvrC and the second UvrB is released. If no lesion is found, the DNA wraps around the other UvrB subunit that will check the other stand for damage. The protein is UvrABC system protein B of Francisella tularensis subsp. tularensis (strain SCHU S4 / Schu 4).